Consider the following 137-residue polypeptide: Large ribosomal subunit protein uL16 (137 aa).

This sequence belongs to the universal ribosomal protein uL16 family. As to quaternary structure, part of the 50S ribosomal subunit.

Binds 23S rRNA and is also seen to make contacts with the A and possibly P site tRNAs. The protein is Large ribosomal subunit protein uL16 of Streptococcus mutans serotype c (strain ATCC 700610 / UA159).